A 386-amino-acid polypeptide reads, in one-letter code: Succinyl-diaminopimelate desuccinylase (386 aa).

His75 lines the Zn(2+) pocket. Residue Asp77 is part of the active site. Asp108 lines the Zn(2+) pocket. The active-site Proton acceptor is Glu138. 3 residues coordinate Zn(2+): Glu139, Glu167, and His356.

It belongs to the peptidase M20A family. DapE subfamily. In terms of assembly, homodimer. Zn(2+) serves as cofactor. Co(2+) is required as a cofactor.

The catalysed reaction is N-succinyl-(2S,6S)-2,6-diaminopimelate + H2O = (2S,6S)-2,6-diaminopimelate + succinate. The protein operates within amino-acid biosynthesis; L-lysine biosynthesis via DAP pathway; LL-2,6-diaminopimelate from (S)-tetrahydrodipicolinate (succinylase route): step 3/3. Catalyzes the hydrolysis of N-succinyl-L,L-diaminopimelic acid (SDAP), forming succinate and LL-2,6-diaminopimelate (DAP), an intermediate involved in the bacterial biosynthesis of lysine and meso-diaminopimelic acid, an essential component of bacterial cell walls. In Caulobacter vibrioides (strain ATCC 19089 / CIP 103742 / CB 15) (Caulobacter crescentus), this protein is Succinyl-diaminopimelate desuccinylase.